A 367-amino-acid polypeptide reads, in one-letter code: tRNA-dihydrouridine(20a/20b) synthase [NAD(P)+] (367 aa).

FMN is bound by residues 45 to 47 (PMV) and Q99. Catalysis depends on C128, which acts as the Proton donor. FMN is bound by residues K169, H197, 231–233 (NGD), and 255–256 (VR).

This sequence belongs to the Dus family. Dus4 subfamily. Requires FMN as cofactor.

The enzyme catalyses 5,6-dihydrouridine(20a) in tRNA + NADP(+) = uridine(20a) in tRNA + NADPH + H(+). The catalysed reaction is 5,6-dihydrouridine(20a) in tRNA + NAD(+) = uridine(20a) in tRNA + NADH + H(+). It catalyses the reaction 5,6-dihydrouridine(20b) in tRNA + NAD(+) = uridine(20b) in tRNA + NADH + H(+). It carries out the reaction 5,6-dihydrouridine(20b) in tRNA + NADP(+) = uridine(20b) in tRNA + NADPH + H(+). The enzyme catalyses a 5,6-dihydrouridine in mRNA + NAD(+) = a uridine in mRNA + NADH + H(+). The catalysed reaction is a 5,6-dihydrouridine in mRNA + NADP(+) = a uridine in mRNA + NADPH + H(+). Catalyzes the synthesis of dihydrouridine, a modified base found in the D-loop of most tRNAs. Specifically modifies U20a and U20b in cytoplasmic tRNAs. Also able to mediate dihydrouridylation of some mRNAs, thereby affecting their translation. The protein is tRNA-dihydrouridine(20a/20b) synthase [NAD(P)+] of Saccharomyces cerevisiae (strain ATCC 204508 / S288c) (Baker's yeast).